A 318-amino-acid chain; its full sequence is Oxidoreductase swnN (318 aa).

The protein belongs to the NmrA-type oxidoreductase family. Isoflavone reductase subfamily.

Its pathway is mycotoxin biosynthesis. Functionally, aminotransferase; part of the gene cluster that mediates the biosynthesis of swainsonine (SW), a cytotoxic fungal alkaloid and a potential cancer therapy drug. Swainsonine production occurs via a multibranched pathway and is dispensable for fungal colonization of plants and infection of insect hosts. The first step of swainsonine biosynthesis is the production of the precursor pipecolic acid (PA) via conversion of L-lysine (Lys) to 1-piperideine-6-carboxylate (P6C) by the aminotransferase swnA, the latter being further reduced to PA by the reductase swnR. The PKS-NRPS hybrid synthetase swnK uptakes and condensates PA and malonyl-CoA with and without skipping of the ketoreductase (KR) domain in order to produce 3 intermediates, 1-oxoindolizidine, (1S)-1-hydroxyindolizin, and (1R)-1-hydroxyindolizine; with the transisomer (1S)-1-hydroxyindolizin being predominant. The terminal thioester reductase (TE) domain of swnK is involved in reduction of the thioester bond to release the intermediate aldehydes. The oxidoreductase swnN could contribute to the reduction of 1-oxoindolizidine to (1S)-1-hydroxyindolizin and (1R)-1-hydroxyindolizine, contributing to the major route of SW production. The dioxygenase swnH2 would be responsible for the oxidization of (1R)-1-hydroxyindolizine into (1R,2S)-1,2-dihydroxyindolizine and of (1S)-1-hydroxyindolizin to yield both (1R,2S)-1,2-dihydroxyindolizine and (1S,2S)-1,2-dihydroxyindolizine. The dioxygenase swnH1 then performs the conversion of the 1,2-dihydroxyindolizine epimers to SW. The sequence is that of Oxidoreductase swnN from Arthroderma benhamiae (strain ATCC MYA-4681 / CBS 112371) (Trichophyton mentagrophytes).